The chain runs to 259 residues: Bisphosphoglycerate mutase (259 aa).

Position 2 is an N-acetylserine (Ser2). Substrate contacts are provided by residues 10-17 (RHGEGAWN), 23-24 (CS), Arg62, 89-92 (ERHY), Arg100, and 116-117 (RR). His11 functions as the Tele-phosphohistidine intermediate in the catalytic mechanism. The active-site Proton donor/acceptor is Glu89. Phosphothreonine is present on Thr122. 189-190 (GN) lines the substrate pocket.

Belongs to the phosphoglycerate mutase family. BPG-dependent PGAM subfamily. In terms of assembly, homodimer.

It catalyses the reaction (2R)-3-phospho-glyceroyl phosphate = (2R)-2,3-bisphosphoglycerate + H(+). It carries out the reaction (2R)-2-phosphoglycerate = (2R)-3-phosphoglycerate. At alkaline pH BPGM favors the synthase reaction; however, at lower pH the phosphatase reaction is dominant. Inhibited by citrate. Functionally, plays a major role in regulating hemoglobin oxygen affinity by controlling the levels of its allosteric effector 2,3-bisphosphoglycerate (2,3-BPG). Also exhibits mutase (EC 5.4.2.11) activity. The chain is Bisphosphoglycerate mutase (BPGM) from Macaca fascicularis (Crab-eating macaque).